The primary structure comprises 478 residues: Sporozoite surface protein P36p (478 aa).

An N-terminal signal peptide occupies residues 1–41 (MYVLVLIHMCYHFTMKRKKLFVYFIFLSFIINFNFNININF). 6-Cys domains are found at residues 42–178 (VCSN…IKKT) and 181–326 (KIKG…FDNN). 6 disulfide bridges follow: Cys-59-Cys-71, Cys-85-Cys-159, Cys-102-Cys-157, Cys-185-Cys-209, Cys-223-Cys-302, and Cys-243-Cys-300. 2 N-linked (GlcNAc...) asparagine glycosylation sites follow: Asn-109 and Asn-138. 3 N-linked (GlcNAc...) asparagine glycosylation sites follow: Asn-229, Asn-279, and Asn-291. The GPI-anchor amidated serine moiety is linked to residue Ser-455. The propeptide at 456–478 (SSKYILFNNFLILFIFLIYIYST) is removed in mature form.

The protein resides in the cell surface. The protein localises to the cell membrane. Involved in sporozoite infection of hepatocytes and replication therein. This Plasmodium falciparum (isolate 3D7) protein is Sporozoite surface protein P36p (PF52).